The primary structure comprises 688 residues: MIOREX complex component 1 (688 aa).

The segment at 1–24 (MGLKITKGQLRTKDLNQSSSKSSQ) is disordered. The N-terminal 46 residues, 1 to 46 (MGLKITKGQLRTKDLNQSSSKSSQSSRIGVDTCIFTRMLPRINTAI), are a transit peptide targeting the mitochondrion.

Associates with the mitochondrial ribosome.

The protein resides in the mitochondrion. Component of MIOREX complexes, large expressome-like assemblies of ribosomes with factors involved in all the steps of post-transcriptional gene expression. This chain is MIOREX complex component 1, found in Saccharomyces cerevisiae (strain ATCC 204508 / S288c) (Baker's yeast).